The following is a 346-amino-acid chain: Histidinol-phosphate aminotransferase (346 aa).

At Lys-209 the chain carries N6-(pyridoxal phosphate)lysine.

This sequence belongs to the class-II pyridoxal-phosphate-dependent aminotransferase family. Histidinol-phosphate aminotransferase subfamily. In terms of assembly, homodimer. The cofactor is pyridoxal 5'-phosphate.

It carries out the reaction L-histidinol phosphate + 2-oxoglutarate = 3-(imidazol-4-yl)-2-oxopropyl phosphate + L-glutamate. It functions in the pathway amino-acid biosynthesis; L-histidine biosynthesis; L-histidine from 5-phospho-alpha-D-ribose 1-diphosphate: step 7/9. The polypeptide is Histidinol-phosphate aminotransferase (Vibrio cholerae serotype O1 (strain ATCC 39541 / Classical Ogawa 395 / O395)).